We begin with the raw amino-acid sequence, 1451 residues long: Fanconi anemia group D2 protein homolog (1451 aa).

Positions 1–291 (MVSKRSRLDF…VKFILHSVTD (291 aa)) are interaction with FANCE. Ser222 carries the phosphoserine modification. Positions 248-359 (VFSSLRLDPN…IKSAIRYEKT (112 aa)) are interaction with BRCA2. Residue Lys561 forms a Glycyl lysine isopeptide (Lys-Gly) (interchain with G-Cter in ubiquitin) linkage. Residue Ser716 is modified to Phosphoserine. A disordered region spans residues 858-879 (AAKSRHKGKTGGKKQKADSSTA). Positions 860–871 (KSRHKGKTGGKK) are enriched in basic residues. 3 positions are modified to phosphoserine: Ser1257, Ser1406, and Ser1414. A disordered region spans residues 1399 to 1451 (IISQHPSSPENTSEDSEDGMTSYVSRNRAIEDGEDEANDGQDRDSDESDDSSS). The segment covering 1430 to 1451 (DGEDEANDGQDRDSDESDDSSS) has biased composition (acidic residues).

Belongs to the Fanconi anemia protein FANCD2 family. As to quaternary structure, homodimer; cannot be ubiquitinated and does not bind DNA. Part of a FANCI-FANCD2 heterodimeric complex that binds and scans dsDNA for DNA damage. Interacts directly with FANCE and FANCI. Interacts with USP1 and MEN1. The ubiquitinated form specifically interacts with BRCA1 and BLM. Both the nonubiquitinated and the monoubiquitinated forms interact with BRCA2; this interaction is mediated by phosphorylated FANCG and the complex also includes XCCR3. The ubiquitinated form specifically interacts with MTMR15/FAN1 (via UBZ-type zinc finger), leading to recruit MTMR15/FAN1 to sites of DNA damage. Interacts with DCLRE1B/Apollo. Interacts with POLN. Interacts with UHRF1 and UHRF2; these interactions promote FANCD2 activation. Post-translationally, monoubiquitinated on Lys-561 during S phase and upon genotoxic stress by FANCL in complex with E2 ligases UBE2T or UBE2W. Deubiquitinated by USP1 as cells enter G2/M, or once DNA repair is completed. Monoubiquitination requires the joint intervention of the FANC core complex, including FANCA, FANCB, FANCC, FANCE, FANCF, FANCG, and FANCM, and proteins involved in cell cycle checkpoints and DNA repair, including RPA1, ATR, CHEK1 and BRCA1, and is mediated by FANCL/PHF9. Monoubiquitination prevents DNA release from the FANCI-FANCD2 complex. FANCD2 is only ubiquitinated in the FANCI-FANCD2 complex and the monoubiquitination of FANCD2 is promoted by phosphorylation of FANCI. Ubiquitination is required for binding to chromatin, interaction with BRCA1, BRCA2 and MTMR15/FAN1, DNA repair, and normal cell cycle progression. In terms of processing, phosphorylated on several sites including Ser-222 and Ser-1401 in response to genotoxic stress by ATM and/or ATR.

The protein localises to the nucleus. Its function is as follows. Required for maintenance of chromosomal stability. Promotes accurate and efficient pairing of homologs during meiosis. Involved in the repair of DNA double-strand breaks, both by homologous recombination and single-strand annealing. The FANCI-FANCD2 complex binds and scans double-stranded DNA (dsDNA) for DNA damage; this complex stalls at DNA junctions between double-stranded DNA and single-stranded DNA. May participate in S phase and G2 phase checkpoint activation upon DNA damage. Plays a role in preventing breakage and loss of missegregating chromatin at the end of cell division, particularly after replication stress. Promotes BRCA2/FANCD1 loading onto damaged chromatin. May also be involved in B-cell immunoglobulin isotype switching. The polypeptide is Fanconi anemia group D2 protein homolog (Fancd2) (Rattus norvegicus (Rat)).